A 479-amino-acid polypeptide reads, in one-letter code: Altronate oxidoreductase (479 aa).

18-29 (IIQFGEGNFLRA) provides a ligand contact to NAD(+).

The protein belongs to the mannitol dehydrogenase family. UxaB subfamily.

The enzyme catalyses D-altronate + NAD(+) = keto-D-tagaturonate + NADH + H(+). Its pathway is carbohydrate metabolism; pentose and glucuronate interconversion. The chain is Altronate oxidoreductase from Phocaeicola vulgatus (strain ATCC 8482 / DSM 1447 / JCM 5826 / CCUG 4940 / NBRC 14291 / NCTC 11154) (Bacteroides vulgatus).